Here is a 398-residue protein sequence, read N- to C-terminus: Arylacetamide deacetylase (398 aa).

At 1 to 5 the chain is on the cytoplasmic side; that stretch reads MGKTI. Residues 6–26 traverse the membrane as a helical; Signal-anchor for type II membrane protein segment; it reads SLLISVVLVAYYLYIPLPDAI. The Lumenal portion of the chain corresponds to 27 to 398; the sequence is EEPWKVVWET…QYLSWLIKNL (372 aa). Positions 110 to 112 match the Involved in the stabilization of the negatively charged intermediate by the formation of the oxyanion hole motif; the sequence is HGG. The cysteines at positions 115 and 339 are disulfide-linked. Ser-188 is an active-site residue. Asn-281 is a glycosylation site (N-linked (GlcNAc...) asparagine). Residues Asp-342 and His-372 contribute to the active site.

This sequence belongs to the 'GDXG' lipolytic enzyme family. In terms of processing, N-glycosylated. Highest levels in liver with lower levels in jejunum and kidney.

The protein localises to the endoplasmic reticulum membrane. It localises to the microsome membrane. It catalyses the reaction a triacylglycerol + H2O = a diacylglycerol + a fatty acid + H(+). Displays cellular triglyceride lipase activity in liver, increases the levels of intracellular fatty acids derived from the hydrolysis of newly formed triglyceride stores and plays a role in very low-density lipoprotein assembly. Displays serine esterase activity in liver. Deacetylates a variety of arylacetamide substrates, including xenobiotic compounds and procarcinogens, converting them to the primary arylamide compounds and increasing their toxicity. The polypeptide is Arylacetamide deacetylase (Aadac) (Mus musculus (Mouse)).